A 1533-amino-acid chain; its full sequence is Glycogen debranching enzyme (1533 aa).

Phosphoserine is present on S64. Residues D527, H530, and D628 contribute to the active site.

This sequence belongs to the glycogen debranching enzyme family. In terms of assembly, monomer. Interacts with NHLRC1/malin. Post-translationally, ubiquitinated. As to expression, ubiquitous. Expressed in striated skeletal muscle, heart, liver, spleen, skin, spinal cord, lung, kidney and testicle.

The protein resides in the cytoplasm. It carries out the reaction Transfers a segment of a (1-&gt;4)-alpha-D-glucan to a new position in an acceptor, which may be glucose or a (1-&gt;4)-alpha-D-glucan.. It catalyses the reaction Hydrolysis of (1-&gt;6)-alpha-D-glucosidic branch linkages in glycogen phosphorylase limit dextrin.. Multifunctional enzyme acting as 1,4-alpha-D-glucan:1,4-alpha-D-glucan 4-alpha-D-glycosyltransferase and amylo-1,6-glucosidase in glycogen degradation. In Equus caballus (Horse), this protein is Glycogen debranching enzyme.